Here is a 700-residue protein sequence, read N- to C-terminus: MGINVSRTADLGSNEWLQRFVGRHHIAHDDEAFWNGLLNYNIVLPENSQDQLNLDSRLETLCQSFIGNNLKTGNFGSLVTVFLEKTSELLSLSDQESNMHVWQTFNALFIIRTLVKYINETGSEFQLLQHFEALPSAELVQAAVELQQQTPAESATIAIEATEQAAAAAASAPVFVDGAKFETFIDALVNLIVVIPVKEFTYHLHLEAVNMLITLLSVHLFAQQPTEKSIVFRTVFKCQHANVLMSALLHFVARMVEVPHTMFGSSSAGSIVFGIAESLLSIFTFRKQQDVLKASNAVGGELSLQFRTHYPLANQSLLLILILTNHCTAQENAYRASLFGCADSKDSPKQGTVSFQIDFSAVYETLCRIVTIDQATLLLYLLLHRNERFYRFVMQQQDLEQLVIPILQTLYNAPDSNSHHIYMSLIVLLILSEDEGFNKNVHTIMLKNITWYTERSISEISLGGILILIVIRTIQYNMLKMRDKYLHTNCLAALANMSGHFRALHPYVAQRLVSLFETLARKHTRLDAQLKEPADSAVFVNVVTTAEDMLQDLSVLEEVLRMVLEILNSCLTNQLVYCPNLVYTLLYKRSVFEGFRSHHAFQDVVQNIDMVVGFFSSRLQRVQEQRGELGVNEVLEVISKGASQWSSDRLRKFPDLKFKYVEEDAPEEFFIPYVWTLVCKYGCVHFSSESIKTVTTDIAC.

Gly-2 carries N-myristoyl glycine lipidation. A Phosphoserine modification is found at Ser-347.

It belongs to the dymeclin family.

This is Dymeclin from Drosophila pseudoobscura pseudoobscura (Fruit fly).